A 277-amino-acid polypeptide reads, in one-letter code: Collectin-10 (277 aa).

A signal peptide spans 1–27 (MNGFASLLRRNQFILLVLFLLQIQSLG). The tract at residues 40 to 107 (ATHTISPGPK…GDKGEKGLLG (68 aa)) is disordered. Residues 49–64 (KGDDGEKGDPGEEGKH) are compositionally biased toward basic and acidic residues. In terms of domain architecture, Collagen-like spans 53–112 (GEKGDPGEEGKHGKVGRMGPKGIKGELGDMGDQGNIGKTGPIGKKGDKGEKGLLGIPGEK). Positions 155-271 (TEEKFYYIVQ…CHLTMYFVCE (117 aa)) constitute a C-type lectin domain. 2 disulfide bridges follow: Cys176-Cys270 and Cys248-Cys262. Residue Asn258 is glycosylated (N-linked (GlcNAc...) asparagine).

The protein belongs to the COLEC10/COLEC11 family. As to expression, highly expressed in liver, placenta and adrenal gland. Moderately expressed in small intestine, lung, stomach and prostate. Weakly expressed in trachea and spleen.

Its subcellular location is the secreted. The protein resides in the golgi apparatus. The protein localises to the cytoplasm. In terms of biological role, lectin that binds to various sugars: galactose &gt; mannose = fucose &gt; N-acetylglucosamine &gt; N-acetylgalactosamine. Acts as a chemoattractant, probably involved in the regulation of cell migration. The chain is Collectin-10 (COLEC10) from Homo sapiens (Human).